The sequence spans 1371 residues: MEVENRPYPYMVSDANLLQQIKESSAEGLFKSFSLLLGKDVRESGVKFEALLGVYTNATQFVKFLETSLAVSCVNTEFKDLKRMTDGKIQFKINVPTIAHGDGRRPQKQKQFIIMKATNKHHIGAEIELSTQDLELLFLSKETPLDVTEYVGAVKTITSALQFGIDALERGLIDTVLTVKLRHAPPLFILKTLADPTYTERGLKKNVKSDLISMFKTHLVNNSFFLDKSEHLPHSRQYVLGILTEMIGAVCKETVFKGISTYSTANGQPISGVLETTDKVMRKLVNVIGQADNSIMGPAAYANYVVRGENLVTAISYGKAMRNFDHFMSKLVDNPTSNLDNDAVDTFESTGSIQKTPISTSVVMVGNKLIALESLQRMYNETQLPYPLNRRMHYTYYFPVGLHLPSPKYSTSMSVKGTENVLHQSVEAWIVNKNNTLQCFNYQNALKSICHPRMNSPILCARALGEAFPDVHNLNIYGIRSEDAHTMNLYQIVYDYYDNKHVAHVHSLAQKSMMTHEEVLHPTNHEILRTEVHPFFDVYAERHQGAAVQYRATHRNLSGNLPPPLAPYSFQECRGYQFEVASGLNHVIDSTTMEIIQETAFDPAYPLLCYIVESMIHGQEEKFVMNIPLIALCIQTYWNNSGRLAFINSFYMLKFICTHMGNGHISKDAYSCYRKIYGELIAIEQSLYRLAGHENVANENIGQLINAILDKDLLPPFAYNDIFTNLLRKSSRHPVVKIGMEEYDDDNDQQNCINIREKMEDLVGNMVNIYQQRNNTDHSRRYVLDVGELQENTYNSVLEKIFYYVLLPVCTNGHVCGMGVDFENVALTLTYNGPVFASAVNQDADILDHLENGTLRDVLVASEIRPTVGMIRRLCTSFLTCPFITQAARIKTDRDPGQNIVTHTDGKYVHQTVLVNGFAAFAIADKSRDAAHCLFYPVPFNKLYCDPMVAATLHPIVAEFITEIPSQRNAVVFNLPPRLIAEYEEWHKSPMSSYVSTCSQTPLSLSTMIAMHLKLSPVSFICQSRHKIHPGFALTAVRTDEVVAEHIMYSSKASTSVFIGQPTVHRKEVRSDAVVFDINHELASLDTALGYSSTIVPAHAAAITTDMGIHCQDLFAMFPSEAYSNQQLNEYIKQKIGSDRVYGMPLRDPREYMGGNRRVTLPGLSHGQLATCEVIMTPVTADITYFQSSNSPRGRASCVVSCDAYNNESAEKFLYDHSLPDPCYEFRSTINPWASQIGSLGDVFFNSQHRQMAGPTLYSPCKQFFNKEAILKNNKLFYTLVTEYVNRLTGAPATSNTDFQYVVINGTDVFLEQPCQFLQEAYPTLSASHRALLDEYMSHKTTHAPVHVNQYLVEEVAPMKRLLKVGNKTVY.

The protein belongs to the herpesviridae major capsid protein family. In terms of assembly, homomultimer. Makes the hexons and eleven out of twelve pentons. Interacts with triplex proteins 1/TRX1 and 2/TRX2; adjacent capsomers are linked together in groups of three by triplexes, heterotrimeric complexes composed of one molecule of TRX1 and two molecules of TRX2. Interacts with scaffold protein; this interaction allows efficient MCP transport to the host nucleus. Interacts with capsid vertex component 2/CVC2. Interacts with the small capsomere-interacting protein/SCP.

It is found in the virion. The protein resides in the host nucleus. Self-assembles to form an icosahedral capsid with a T=16 symmetry, about 200 nm in diameter, and consisting of 150 hexons and 12 pentons (total of 162 capsomers). Hexons form the edges and faces of the capsid and are each composed of six MCP molecules. In contrast, one penton is found at each of the 12 vertices. Eleven of the pentons are MCP pentamers, while the last vertex is occupied by the portal complex. The capsid is surrounded by a layer of proteinaceous material designated the tegument which, in turn, is enclosed in an envelope of host cell-derived lipids containing virus-encoded glycoproteins. This is Major capsid protein from Saimiriine herpesvirus 2 (strain 11) (SaHV-2).